A 33-amino-acid polypeptide reads, in one-letter code: Mytimycin (33 aa).

It localises to the secreted. Has antifungal activity against N.crassa and F.culmorum. The chain is Mytimycin from Mytilus edulis (Blue mussel).